The following is a 128-amino-acid chain: Large ribosomal subunit protein bL17 (128 aa).

This sequence belongs to the bacterial ribosomal protein bL17 family. In terms of assembly, part of the 50S ribosomal subunit. Contacts protein L32.

The sequence is that of Large ribosomal subunit protein bL17 from Petrotoga mobilis (strain DSM 10674 / SJ95).